The sequence spans 444 residues: Glutamyl-tRNA reductase (444 aa).

Residues 49–52, Ser109, 114–116, and Gln120 each bind substrate; these read TCNR and ETQ. Cys50 acts as the Nucleophile in catalysis. 189–194 is an NADP(+) binding site; the sequence is GAGKMG.

The protein belongs to the glutamyl-tRNA reductase family. Homodimer.

The catalysed reaction is (S)-4-amino-5-oxopentanoate + tRNA(Glu) + NADP(+) = L-glutamyl-tRNA(Glu) + NADPH + H(+). It functions in the pathway porphyrin-containing compound metabolism; protoporphyrin-IX biosynthesis; 5-aminolevulinate from L-glutamyl-tRNA(Glu): step 1/2. In terms of biological role, catalyzes the NADPH-dependent reduction of glutamyl-tRNA(Glu) to glutamate 1-semialdehyde (GSA). This chain is Glutamyl-tRNA reductase, found in Bacillus anthracis (strain A0248).